The chain runs to 118 residues: Large ribosomal subunit protein bL21c (118 aa).

This sequence belongs to the bacterial ribosomal protein bL21 family. In terms of assembly, part of the 50S ribosomal subunit.

The protein resides in the plastid. It localises to the chloroplast. Its function is as follows. This protein binds to 23S rRNA. The protein is Large ribosomal subunit protein bL21c of Zygnema circumcarinatum (Green alga).